The primary structure comprises 445 residues: MAGGMKVAVLPAVGAGPWSWGAGGCGAVRLLLVLFGCFVCGSAGIDLNVVTLRESEILFMNTSRQSCYKNVLIPKWHDIWTRIQIRVNSSKLVRVTQVENEDKLKELEQFSIWNFFSSFLKEKLNDTYINVGLYSTKTCLKVEILEEDTKYSVIVTRRFDPKLFLIFLLGLTLFFCGDLLSRSQIFYYSTGMSVGIVASLLIIIFIVSKFMPKKSPIYIILVGGWSFSLYLIQLVFKNLQEIWRCYWQYLLSYVLAVGFMSFAVCYKYGPLENERSINLLTWTLQLLGLCFMYSSIQIPHIALAIVVIALCTKNLDYPIHWLYITYRKMCKATEKTVPPRLLTEEEYRLQGEVETRKALEQLREYCNSPDCSAWKTVSRIQSPKRFADFVEGSFHLTPNEVSVHEQEYGLGSIIAQDELSEETSSEEEDSDSRYPLVVQQNSFLT.

An N-terminal signal peptide occupies residues 1-44 (MAGGMKVAVLPAVGAGPWSWGAGGCGAVRLLLVLFGCFVCGSAG). The N-linked (GlcNAc...) asparagine glycan is linked to asparagine 125. 5 helical membrane-spanning segments follow: residues 161–181 (PKLFLIFLLGLTLFFCGDLLS), 186–206 (FYYSTGMSVGIVASLLIIIFI), 216–236 (PIYIILVGGWSFSLYLIQLVF), 245–265 (CYWQYLLSYVLAVGFMSFAVC), and 289–309 (LCFMYSSIQIPHIALAIVVIA). The a; required for its colocalization with lamins at the nuclear envelope stretch occupies residues 186 to 297 (FYYSTGMSVG…GLCFMYSSIQ (112 aa)). The segment at 336–405 (TVPPRLLTEE…LTPNEVSVHE (70 aa)) is b; required for interaction with RAN-GTP. Residues 336-445 (TVPPRLLTEE…LVVQQNSFLT (110 aa)) form a required for nuclear localization region. A phosphoserine mark is found at serine 368, serine 424, and serine 425. The segment covering 418-430 (ELSEETSSEEEDS) has biased composition (acidic residues). Residues 418–445 (ELSEETSSEEEDSDSRYPLVVQQNSFLT) form a disordered region.

Belongs to the NEMP family. As to quaternary structure, homooligomer. Interacts with RAN-GTP. Interacts with EMD. In terms of processing, phosphorylation may regulate its interaction with RAN-GTP.

The protein resides in the nucleus inner membrane. Its subcellular location is the nucleus envelope. Its function is as follows. Together with EMD, contributes to nuclear envelope stiffness in germ cells. Required for female fertility. Essential for normal erythropoiesis. Required for efficient nuclear envelope opening and enucleation during the late stages of erythroblast maturation. This is Nuclear envelope integral membrane protein 1 (NEMP1) from Bos taurus (Bovine).